The sequence spans 291 residues: MKISITAPAKINLSLDALYKREDGYHEVEMVMTTIDLADRLSLERLDEDKIVLDVKAHFIPEDRRNLIYQAALLLKKRFNVKMGVRIIIDKHIPVSAGLAGGSSDAAAALKGLNIIWELGLSIEELAEISSEIGSDIAFCVYGGTALATGRGEKITALPNIPGCWIVLAKPSISVSTPTIYKELQVENVEHPNTKKMIESIKIGDLDGIFASTGNVLESVTLEKNPQVKRIKDRMMAFGAEAALMSGSGPTVFALIKQYSRAKRVYNGLRGFCEEVYMVRPWSESENETIN.

The active site involves K10. 94–104 (PVSAGLAGGSS) lines the ATP pocket. The active site involves D136.

Belongs to the GHMP kinase family. IspE subfamily.

It carries out the reaction 4-CDP-2-C-methyl-D-erythritol + ATP = 4-CDP-2-C-methyl-D-erythritol 2-phosphate + ADP + H(+). The protein operates within isoprenoid biosynthesis; isopentenyl diphosphate biosynthesis via DXP pathway; isopentenyl diphosphate from 1-deoxy-D-xylulose 5-phosphate: step 3/6. Functionally, catalyzes the phosphorylation of the position 2 hydroxy group of 4-diphosphocytidyl-2C-methyl-D-erythritol. The sequence is that of 4-diphosphocytidyl-2-C-methyl-D-erythritol kinase from Listeria welshimeri serovar 6b (strain ATCC 35897 / DSM 20650 / CCUG 15529 / CIP 8149 / NCTC 11857 / SLCC 5334 / V8).